The chain runs to 457 residues: MTISSSLTPKETLAELDRYIVGQAAAKRSVAIALRNRWRRQQVPSPLREEIAPKNIIMIGPTGVGKTEIARRLASLAQSPFIKVEASKFTEVGYVGRDVESMIRDLVELAISMVKDEEKKRIEGLAEANAEDRILDLLLPPTPVHSESSVDLLPASADVSAAGSSTKEKFRQMLRDGKLDEREVEVEVTETSQAPMVEVMGVSGMDDMQSNIQDAFSRMFPKKTKQSKMKVPDALDVLTKEEMEKLVDMEMVLKEALRRTEQSGIVFLDEIDKVASKGGSSHGPEVSREGVQRDLLPIVEGATVSTKYGMVKTDHILFIASGAFHVAKPSDLIPELQGRFPIRVELESLGKDEFVRILTEPENALTKQYIALLATEGVTLRFEDEAIEEIATIAVQVNESTEEIGARRLHTVVERVLDVLSFDACEREESEFVVTAQYVRDQLSEIAEDQDLSRYIL.

Residues V21, 63–68 (GVGKTE), D269, E335, and R407 each bind ATP.

This sequence belongs to the ClpX chaperone family. HslU subfamily. In terms of assembly, a double ring-shaped homohexamer of HslV is capped on each side by a ring-shaped HslU homohexamer. The assembly of the HslU/HslV complex is dependent on binding of ATP.

It localises to the cytoplasm. Functionally, ATPase subunit of a proteasome-like degradation complex; this subunit has chaperone activity. The binding of ATP and its subsequent hydrolysis by HslU are essential for unfolding of protein substrates subsequently hydrolyzed by HslV. HslU recognizes the N-terminal part of its protein substrates and unfolds these before they are guided to HslV for hydrolysis. The polypeptide is ATP-dependent protease ATPase subunit HslU (Desulfotalea psychrophila (strain LSv54 / DSM 12343)).